The sequence spans 443 residues: Exodeoxyribonuclease 7 large subunit (443 aa).

It belongs to the XseA family. Heterooligomer composed of large and small subunits.

The protein localises to the cytoplasm. It catalyses the reaction Exonucleolytic cleavage in either 5'- to 3'- or 3'- to 5'-direction to yield nucleoside 5'-phosphates.. Functionally, bidirectionally degrades single-stranded DNA into large acid-insoluble oligonucleotides, which are then degraded further into small acid-soluble oligonucleotides. The polypeptide is Exodeoxyribonuclease 7 large subunit (Legionella pneumophila (strain Corby)).